The following is a 255-amino-acid chain: uncharacterized protein (255 aa).

A signal peptide spans 1 to 23; sequence MKRLNTLVLYISFLILIISIVAG. The N-palmitoyl cysteine moiety is linked to residue Cys24. Cys24 carries the S-diacylglycerol cysteine lipid modification.

Belongs to the staphylococcal tandem lipoprotein family.

The protein localises to the cell membrane. This is an uncharacterized protein from Staphylococcus aureus (strain N315).